Here is a 285-residue protein sequence, read N- to C-terminus: Vacuolar protein sorting-associated protein 37B (285 aa).

The interaction with IST1 stretch occupies residues 50 to 170 (ASNRSLAEGN…ELVLKGQRHP (121 aa)). A VPS37 C-terminal domain is found at 84–173 (FEAYQIKKTK…LKGQRHPQAG (90 aa)). 2 disordered regions span residues 167–215 (QRHP…PPVP) and 242–285 (PLPP…FILQ). Pro residues-rich tracts occupy residues 173-184 (GAPPPPRVPEPS) and 206-215 (RIPPPPPPVP). The segment covering 250-259 (PSQQGFSAQL) has biased composition (polar residues). Residues 262-275 (PYPPALPQRPPPRM) are compositionally biased toward pro residues. Over residues 276 to 285 (APHQPGFILQ) the composition is skewed to low complexity.

The protein belongs to the VPS37 family. Component of the ESCRT-I complex (endosomal sorting complex required for transport I) which consists of TSG101, VPS28, a VPS37 protein (VPS37A to -D) and MVB12A or MVB12B in a 1:1:1:1 stoichiometry. Interacts with TSG101, VPS28, MVB12A and MVB12B. Component of the ESCRT-I complex (endosomal sorting complex required for transport I) which consists of TSG101, VPS28, a VPS37 protein (VPS37A to -D) and UBAP1 in a 1:1:1:1 stoichiometry. Interacts with CEP55. Interacts with IST1.

The protein resides in the late endosome membrane. Component of the ESCRT-I complex, a regulator of vesicular trafficking process. Required for the sorting of endocytic ubiquitinated cargos into multivesicular bodies. May be involved in cell growth and differentiation. The chain is Vacuolar protein sorting-associated protein 37B (Vps37b) from Mus musculus (Mouse).